A 421-amino-acid chain; its full sequence is Replication factor C large subunit (421 aa).

Residue 63–70 (GPPGIGKT) coordinates ATP.

The protein belongs to the activator 1 small subunits family. RfcL subfamily. As to quaternary structure, heteromultimer composed of small subunits (RfcS) and large subunits (RfcL).

Part of the RFC clamp loader complex which loads the PCNA sliding clamp onto DNA. The protein is Replication factor C large subunit of Pyrobaculum calidifontis (strain DSM 21063 / JCM 11548 / VA1).